A 508-amino-acid chain; its full sequence is UDP-N-acetylmuramyl-tripeptide synthetase (508 aa).

S35 serves as a coordination point for UDP-N-acetyl-alpha-D-muramoyl-L-alanyl-D-glutamate. 118 to 124 (GTDGKSS) is an ATP binding site. UDP-N-acetyl-alpha-D-muramoyl-L-alanyl-D-glutamate-binding positions include 163-164 (ST), T190, and R200. Position 232 is an N6-carboxylysine (K232).

It belongs to the MurCDEF family. MurE subfamily. In terms of processing, carboxylation is probably crucial for Mg(2+) binding and, consequently, for the gamma-phosphate positioning of ATP.

The protein localises to the cytoplasm. Its pathway is cell wall biogenesis; peptidoglycan biosynthesis. Its function is as follows. Catalyzes the addition of an amino acid to the nucleotide precursor UDP-N-acetylmuramoyl-L-alanyl-D-glutamate (UMAG) in the biosynthesis of bacterial cell-wall peptidoglycan. This chain is UDP-N-acetylmuramyl-tripeptide synthetase, found in Borreliella burgdorferi (strain ATCC 35210 / DSM 4680 / CIP 102532 / B31) (Borrelia burgdorferi).